The following is a 127-amino-acid chain: Large ribosomal subunit protein bL17 (127 aa).

The protein belongs to the bacterial ribosomal protein bL17 family. In terms of assembly, part of the 50S ribosomal subunit. Contacts protein L32.

This chain is Large ribosomal subunit protein bL17, found in Vibrio vulnificus (strain CMCP6).